The chain runs to 199 residues: FMN-dependent NADH:quinone oxidoreductase (199 aa).

Ser10 is an FMN binding site.

The protein belongs to the azoreductase type 1 family. Homodimer. It depends on FMN as a cofactor.

The catalysed reaction is 2 a quinone + NADH + H(+) = 2 a 1,4-benzosemiquinone + NAD(+). The enzyme catalyses N,N-dimethyl-1,4-phenylenediamine + anthranilate + 2 NAD(+) = 2-(4-dimethylaminophenyl)diazenylbenzoate + 2 NADH + 2 H(+). Functionally, quinone reductase that provides resistance to thiol-specific stress caused by electrophilic quinones. Its function is as follows. Also exhibits azoreductase activity. Catalyzes the reductive cleavage of the azo bond in aromatic azo compounds to the corresponding amines. In Cellvibrio japonicus (strain Ueda107) (Pseudomonas fluorescens subsp. cellulosa), this protein is FMN-dependent NADH:quinone oxidoreductase.